We begin with the raw amino-acid sequence, 358 residues long: Heme A synthase (358 aa).

8 helical membrane passes run I22 to A42, V107 to K127, V133 to W153, L172 to G192, F208 to G228, F269 to V289, A302 to Q322, and V324 to V344. A heme-binding site is contributed by H271. H332 contacts heme.

This sequence belongs to the COX15/CtaA family. Type 2 subfamily. In terms of assembly, interacts with CtaB. Heme b serves as cofactor.

Its subcellular location is the cell membrane. It catalyses the reaction Fe(II)-heme o + 2 A + H2O = Fe(II)-heme a + 2 AH2. Its pathway is porphyrin-containing compound metabolism; heme A biosynthesis; heme A from heme O: step 1/1. Catalyzes the conversion of heme O to heme A by two successive hydroxylations of the methyl group at C8. The first hydroxylation forms heme I, the second hydroxylation results in an unstable dihydroxymethyl group, which spontaneously dehydrates, resulting in the formyl group of heme A. This is Heme A synthase from Bartonella henselae (strain ATCC 49882 / DSM 28221 / CCUG 30454 / Houston 1) (Rochalimaea henselae).